A 607-amino-acid chain; its full sequence is Terpenoid synthase 9 (607 aa).

The Mg(2+) site is built by aspartate 356, aspartate 360, asparagine 501, and aspartate 509. Positions 356-360 (DDTFD) match the DDXXD motif motif.

Belongs to the terpene synthase family. Tpsa subfamily. Mg(2+) is required as a cofactor. The cofactor is Mn(2+). As to expression, predominantly expressed in roots but also in stems, leaves and flowers.

It localises to the cytoplasm. It functions in the pathway secondary metabolite biosynthesis; terpenoid biosynthesis. Involved in terpene biosynthesis in roots. Possesses diterpene (C20) synthase activity in vitro. Does not seem to be involved in sesquiterpene (C15) biosynthesis. The chain is Terpenoid synthase 9 from Arabidopsis thaliana (Mouse-ear cress).